A 193-amino-acid chain; its full sequence is Cysteine and glycine-rich protein 2 (193 aa).

An LIM zinc-binding 1 domain is found at 10–61 (CGACGRTVYHAEEVQCDGRSFHRCCFLCMVCRKNLDSTTVAIHDEEIYCKSC). The Nuclear localization signal motif lies at 64 to 69 (KKYGPK). Lys-91 participates in a covalent cross-link: Glycyl lysine isopeptide (Lys-Gly) (interchain with G-Cter in SUMO2). N6-acetyllysine occurs at positions 112 and 131. In terms of domain architecture, LIM zinc-binding 2 spans 119–170 (CSRCGDSVYAAEKIIGAGKPWHKNCFRCAKCGKSLESTTLTEKEGEIYCKGC). Lys-137 is subject to N6-acetyllysine; alternate. An N6-succinyllysine; alternate modification is found at Lys-137. An N6-acetyllysine modification is found at Lys-161.

As to quaternary structure, interacts with KAT14. The LIM domain 1 is necessary and sufficient for this interaction. Interacts with GLRX3.

Its subcellular location is the nucleus. Drastically down-regulated in response to PDGF-BB or cell injury, that promote smooth muscle cell proliferation and dedifferentiation. Seems to play a role in the development of the embryonic vascular system. The sequence is that of Cysteine and glycine-rich protein 2 (Csrp2) from Mus musculus (Mouse).